Reading from the N-terminus, the 190-residue chain is Probable DNA replication complex GINS protein PSF2 (190 aa).

This sequence belongs to the GINS2/PSF2 family. In terms of assembly, component of the GINS complex which is a heterotetramer of gins1, gins2, gins3 and gins4.

The protein localises to the nucleus. Functionally, the GINS complex plays an essential role in the initiation of DNA replication. This is Probable DNA replication complex GINS protein PSF2 from Brugia malayi (Filarial nematode worm).